The chain runs to 946 residues: DNA ligase 4 (946 aa).

Glu-295, Lys-297, Arg-302, Glu-355, Phe-397, Glu-457, Lys-462, Lys-479, and Lys-481 together coordinate ATP. Lys-297 serves as the catalytic N6-AMP-lysine intermediate. Glu-355 is a Mg(2+) binding site. Position 457 (Glu-457) interacts with Mg(2+). 2 consecutive BRCT domains span residues 688-787 (HRSD…PSHC) and 845-945 (VPHF…NYRL).

Belongs to the ATP-dependent DNA ligase family. It depends on Mg(2+) as a cofactor.

The protein resides in the nucleus. It carries out the reaction ATP + (deoxyribonucleotide)n-3'-hydroxyl + 5'-phospho-(deoxyribonucleotide)m = (deoxyribonucleotide)n+m + AMP + diphosphate.. In terms of biological role, DNA ligase involved in DNA non-homologous end joining (NHEJ); required for double-strand break (DSB) repair. The sequence is that of DNA ligase 4 (LIG4) from Candida glabrata (strain ATCC 2001 / BCRC 20586 / JCM 3761 / NBRC 0622 / NRRL Y-65 / CBS 138) (Yeast).